A 781-amino-acid polypeptide reads, in one-letter code: MSSSSPTGQIASAADIKQENGMESASEGQEAHREVAGGAAVGLSPPAPAPFPLEPGDAATAAARVSGEEGAVAAAAAGAAADQVQLHSELLGRHHHAAAAAAQTPLAFSPDHVACVCEALQQGGNLDRLARFLWSLPQSDLLRGNESLLKARALVAFHQGIYPELYSILESHSFESANHPLLQQLWYKARYTEAERARGRPLGAVDKYRLRRKFPLPRTIWDGEETVYCFKEKSRNALKELYKQNRYPSPAEKRHLAKITGLSLTQVSNWFKNRRQRDRNPSETQSKSESDGNPSTEDESSKGHEDLSPHPLSSSSDGITNLSLSSHMEPVYMQQIGNAKISLSSSGVLLNGSLVPASTSPVFLNGNSFIQGPSGVILNGLNVGNTQAVALNPPKMSSNIVSNGISMTDILGSTSQDVKEFKVLQSSANSATTTSYSPSVPVSFPGLIPSTEVKREGIQTVASQDGGSVVTFTTPVQINQYGIVQIPNSGANSQFLNGSIGFSPLQLPPVSVAASQGNISVSSSTSDGSTFTSESTTVQQGKVFLSSLAPSAVVYTVPNTGQTIGSVKQEGLERSLVFSQLMPVNQNAQVNANLSSENISGSGLHPLASSLVNVSPTHNFSLSPSTLLNPTELNRDIADSQPMSAPVASKSTVTSVSNTNYATLQNCSLITGQDLLSVPMTQAALGEIVPTAEDQVGHPSPAVHQDFVQEHRLVLQSVANMKENFLSNSESKATSSLMMLDSKSKYVLDGMVDTVCEDLETDKKELAKLQTVQLDEDMQDL.

Positions 1 to 10 (MSSSSPTGQI) are enriched in polar residues. Disordered regions lie at residues 1–55 (MSSS…PLEP) and 270–321 (WFKN…GITN). Serine 2 carries the post-translational modification N-acetylserine. Residues 223–282 (GEETVYCFKEKSRNALKELYKQNRYPSPAEKRHLAKITGLSLTQVSNWFKNRRQRDRNPS) constitute a DNA-binding region (homeobox). Composition is skewed to basic and acidic residues over residues 278-290 (DRNPSETQSKSES) and 299-308 (ESSKGHEDLS). Position 640 is a phosphoserine (serine 640).

The protein belongs to the SIX/Sine oculis homeobox family. In terms of assembly, interacts with EYA3; acts cooperatively with EYA3 to transactivate target genes through interaction and nuclear translocation of EYA3 protein.

The protein localises to the nucleus. The protein resides in the cytoplasm. Functionally, transcriptional regulator which can act as both a transcriptional repressor and activator by binding a DNA sequence on these target genes and is involved in processes like cell differentiation, cell migration and cell survival. Transactivates gene expression by binding a 5'-[CAT]A[CT][CT][CTG]GA[GAT]-3' motif present in the Trex site and a 5'-TCA[AG][AG]TTNC-3' motif present in the MEF3 site of the muscle-specific genes enhancer. Acts cooperatively with EYA proteins to transactivate their target genes through interaction and nuclear translocation of EYA protein. Acts synergistically with SIX1 to regulate target genes involved in formation of various organs, including muscle, kidney, gonad, ganglia, olfactory epithelium and cranial skeleton. Plays a role in several important steps of muscle development. Controls the genesis of hypaxial myogenic progenitors in the dermomyotome by transactivating PAX3 and the delamination and migration of the hypaxial precursors from the ventral lip to the limb buds through the transactivation of PAX3, MET and LBX1. Controls myoblast determination by transactivating MYF5, MYOD1 and MYF6. Controls somitic differentiation in myocyte through MYOG transactivation. Plays a role in synaptogenesis and sarcomere organization by participating in myofiber specialization during embryogenesis by activating fast muscle program in the primary myotome resulting in an up-regulation of fast muscle genes, including ATP2A1, MYL1 and TNNT3. Simultaneously, is also able to activate inhibitors of slow muscle genes, such as SOX6, HRASLS, and HDAC4, thereby restricting the activation of the slow muscle genes. During muscle regeneration, negatively regulates differentiation of muscle satellite cells through down-regulation of MYOG expression. During kidney development regulates the early stages of metanephros development and ureteric bud formation through regulation of GDNF, SALL1, PAX8 and PAX2 expression. Plays a role in gonad development by regulating both testis determination and size determination. In gonadal sex determination, transactivates ZFPM2 by binding a MEF3 consensus sequence, resulting in SRY up-regulation. In gonadal size determination, transactivates NR5A1 by binding a MEF3 consensus sequence resulting in gonadal precursor cell formation regulation. During olfactory development mediates the specification and patterning of olfactory placode through fibroblast growth factor and BMP4 signaling pathways and also regulates epithelial cell proliferation during placode formation. Promotes survival of sensory neurons during early trigeminal gangliogenesis. In the developing dorsal root ganglia, up-regulates SLC12A2 transcription. Regulates early thymus/parathyroid organogenesis through regulation of GCM2 and FOXN1 expression. Forms gustatory papillae during development of the tongue. Also plays a role during embryonic cranial skeleton morphogenesis. The polypeptide is Homeobox protein SIX4 (SIX4) (Homo sapiens (Human)).